Here is a 205-residue protein sequence, read N- to C-terminus: Protein-L-isoaspartate O-methyltransferase (205 aa).

S56 is an active-site residue.

Belongs to the methyltransferase superfamily. L-isoaspartyl/D-aspartyl protein methyltransferase family.

It localises to the cytoplasm. The catalysed reaction is [protein]-L-isoaspartate + S-adenosyl-L-methionine = [protein]-L-isoaspartate alpha-methyl ester + S-adenosyl-L-homocysteine. In terms of biological role, catalyzes the methyl esterification of L-isoaspartyl residues in peptides and proteins that result from spontaneous decomposition of normal L-aspartyl and L-asparaginyl residues. It plays a role in the repair and/or degradation of damaged proteins. This Aeromonas hydrophila subsp. hydrophila (strain ATCC 7966 / DSM 30187 / BCRC 13018 / CCUG 14551 / JCM 1027 / KCTC 2358 / NCIMB 9240 / NCTC 8049) protein is Protein-L-isoaspartate O-methyltransferase.